A 407-amino-acid polypeptide reads, in one-letter code: MAPIAGKKAKRGILERLNAGEVVIGDGGFVFALEKRGYVKAGPWTPEAAVEHPEAVRQLHREFLRAGSNVMQTFTFYASEDKLENRGNYVAEKISGQKVNEAACDIARQVADEGDALVAGGVSQTPSYLSCKSETEVKKIFHQQLEVFMKKNVDFLIAEYFEHVEEAVWAVEALKTSGKPIAATMCIGPEGDLHGVSPGECAVRLVKAGAAIVGVNCHFDPSTSLQTIKLMKEGLEAARLKAYLMSHALAYHTPDCGKQGFIDLPEFPFGLEPRVATRWDIQKYAREAYNLGVRYIGGCCGFEPYHIRAIAEELAPERGFLPPASEKHGSWGSGLDMHTKPWIRARARKEYWQNLRIASGRPYNPSMSKPDAWGVTKGAAELMQQKEATTEQQLRALFEKQKFKSAQ.

The region spanning R11–L314 is the Hcy-binding domain. N6-succinyllysine is present on residues K40, K93, and K98. A Zn(2+)-binding site is contributed by C217. 2 positions are modified to N6-succinyllysine: K232 and K241. Residues C299 and C300 each coordinate Zn(2+). S330 bears the Phosphoserine mark. N6-succinyllysine occurs at positions 340 and 377.

In terms of assembly, homotetramer. Zn(2+) is required as a cofactor. Highly expressed in liver and kidney (at protein level). Expressed at lower levels in testis, lung, cerebellum, skeletal muscle and pancreas (at protein level).

It localises to the cytoplasm. The protein localises to the cytosol. The protein resides in the nucleus. The enzyme catalyses L-homocysteine + glycine betaine = N,N-dimethylglycine + L-methionine. The protein operates within amine and polyamine degradation; betaine degradation; sarcosine from betaine: step 1/2. It functions in the pathway amino-acid biosynthesis; L-methionine biosynthesis via de novo pathway; L-methionine from L-homocysteine (BhmT route): step 1/1. Functionally, involved in the regulation of homocysteine metabolism. Converts betaine and homocysteine to dimethylglycine and methionine, respectively. This reaction is also required for the irreversible oxidation of choline. The chain is Betaine--homocysteine S-methyltransferase 1 from Rattus norvegicus (Rat).